The following is a 720-amino-acid chain: Nucleolar protein 11 (720 aa).

Residues 365 to 392 (KDPETKPSNAGAQKKTRERKTNANAGNG) form a disordered region.

The protein resides in the nucleus. Its subcellular location is the nucleolus. Functionally, ribosome biogenesis factor. May be required for both optimal rDNA transcription and pre-rRNA processing. The protein is Nucleolar protein 11 (nol11) of Xenopus laevis (African clawed frog).